The sequence spans 408 residues: LL-diaminopimelate aminotransferase (408 aa).

Substrate is bound by residues tyrosine 15 and glycine 42. Pyridoxal 5'-phosphate-binding positions include tyrosine 72, serine 108–lysine 109, tyrosine 132, asparagine 187, tyrosine 218, and serine 246–serine 248. Positions 109, 132, and 187 each coordinate substrate. At lysine 249 the chain carries N6-(pyridoxal phosphate)lysine. Pyridoxal 5'-phosphate contacts are provided by arginine 257 and asparagine 292. Substrate contacts are provided by asparagine 292 and arginine 388.

It belongs to the class-I pyridoxal-phosphate-dependent aminotransferase family. LL-diaminopimelate aminotransferase subfamily. As to quaternary structure, homodimer. Requires pyridoxal 5'-phosphate as cofactor.

It carries out the reaction (2S,6S)-2,6-diaminopimelate + 2-oxoglutarate = (S)-2,3,4,5-tetrahydrodipicolinate + L-glutamate + H2O + H(+). It participates in amino-acid biosynthesis; L-lysine biosynthesis via DAP pathway; LL-2,6-diaminopimelate from (S)-tetrahydrodipicolinate (aminotransferase route): step 1/1. Involved in the synthesis of meso-diaminopimelate (m-DAP or DL-DAP), required for both lysine and peptidoglycan biosynthesis. Catalyzes the direct conversion of tetrahydrodipicolinate to LL-diaminopimelate. The polypeptide is LL-diaminopimelate aminotransferase (Leptospira biflexa serovar Patoc (strain Patoc 1 / Ames)).